The primary structure comprises 398 residues: KiSS-1 receptor (398 aa).

At Met-1–Pro-46 the chain is on the extracellular side. N-linked (GlcNAc...) asparagine glycans are attached at residues Asn-10, Asn-18, and Asn-28. A helical membrane pass occupies residues Leu-47–Ile-67. The Cytoplasmic segment spans residues Cys-68–Asn-78. Residues Phe-79 to Leu-101 form a helical membrane-spanning segment. The Extracellular portion of the chain corresponds to Leu-102–Tyr-120. Residues Cys-115 and Cys-191 are joined by a disulfide bond. The chain crosses the membrane as a helical span at residues Ile-121–Val-138. The Cytoplasmic portion of the chain corresponds to Asp-139 to Arg-157. Residues Leu-158–Leu-178 traverse the membrane as a helical segment. Topologically, residues Ala-179–Arg-202 are extracellular. The chain crosses the membrane as a helical span at residues Ala-203–Cys-223. Residues Tyr-224 to Arg-263 are Cytoplasmic-facing. The chain crosses the membrane as a helical span at residues Leu-264–Val-284. The Extracellular portion of the chain corresponds to Leu-285–Lys-305. Residues Thr-306–Ser-328 form a helical membrane-spanning segment. At His-329–Leu-398 the chain is on the cytoplasmic side. The tract at residues Ala-341–Leu-363 is disordered.

It belongs to the G-protein coupled receptor 1 family. As to expression, most highly expressed in the pancreas, placenta and spinal cord, with lower-level of expression in peripheral blood leukocytes, kidney, lung, fetal liver, stomach, small intestine, testes, spleen, thymus, adrenal glands and lymph nodes. In the adult brain, expressed in the superior frontal gyrus, putamen, caudate nucleus, cingulate gyrus, nucleus accumbens, hippocampus, pons and amygdala, as well as the hypothalamus and pituitary. Expression levels are higher in early (7-9 weeks) than term placentas. Expression levels were increased in both early placentas and molar pregnancies and were reduced in choriocarcinoma cells. Expressed at higher levels in first trimester trophoblasts than at term of gestation. Also found in the extravillous trophoblast suggesting endocrine/paracrine activation mechanism.

The protein localises to the cell membrane. Its function is as follows. Receptor for metastin (kisspeptin-54 or kp-54), a C-terminally amidated peptide of KiSS1. KiSS1 is a metastasis suppressor protein that suppresses metastases in malignant melanomas and in some breast carcinomas without affecting tumorigenicity. The metastasis suppressor properties may be mediated in part by cell cycle arrest and induction of apoptosis in malignant cells. The receptor is essential for normal gonadotropin-released hormone physiology and for puberty. The hypothalamic KiSS1/KISS1R system is a pivotal factor in central regulation of the gonadotropic axis at puberty and in adulthood. The receptor is also probably involved in the regulation and fine-tuning of trophoblast invasion generated by the trophoblast itself. Analysis of the transduction pathways activated by the receptor identifies coupling to phospholipase C and intracellular calcium release through pertussis toxin-insensitive G(q) proteins. This chain is KiSS-1 receptor (KISS1R), found in Homo sapiens (Human).